The following is a 385-amino-acid chain: Glutamate 5-kinase (385 aa).

K18 is a binding site for ATP. 3 residues coordinate substrate: S57, D144, and N156. 218-224 (TGGMKSK) is an ATP binding site. The PUA domain maps to 283–361 (RGVLSIDAGA…SRIEQVLGHK (79 aa)).

Belongs to the glutamate 5-kinase family.

It localises to the cytoplasm. It catalyses the reaction L-glutamate + ATP = L-glutamyl 5-phosphate + ADP. The protein operates within amino-acid biosynthesis; L-proline biosynthesis; L-glutamate 5-semialdehyde from L-glutamate: step 1/2. Its function is as follows. Catalyzes the transfer of a phosphate group to glutamate to form L-glutamate 5-phosphate. This Syntrophus aciditrophicus (strain SB) protein is Glutamate 5-kinase.